The following is a 459-amino-acid chain: tRNA modification GTPase MnmE (459 aa).

Positions 23, 86, and 125 each coordinate (6S)-5-formyl-5,6,7,8-tetrahydrofolate. The region spanning 221–380 (GIDAVIIGKP…LENAITELFV (160 aa)) is the TrmE-type G domain. N231 serves as a coordination point for K(+). Residues 231–236 (NVGKSS), 250–256 (TDIPGTT), and 275–278 (DTAG) contribute to the GTP site. S235 serves as a coordination point for Mg(2+). Residues T250, I252, and T255 each coordinate K(+). A Mg(2+)-binding site is contributed by T256. K459 provides a ligand contact to (6S)-5-formyl-5,6,7,8-tetrahydrofolate.

It belongs to the TRAFAC class TrmE-Era-EngA-EngB-Septin-like GTPase superfamily. TrmE GTPase family. In terms of assembly, homodimer. Heterotetramer of two MnmE and two MnmG subunits. The cofactor is K(+).

It localises to the cytoplasm. In terms of biological role, exhibits a very high intrinsic GTPase hydrolysis rate. Involved in the addition of a carboxymethylaminomethyl (cmnm) group at the wobble position (U34) of certain tRNAs, forming tRNA-cmnm(5)s(2)U34. This Acetivibrio thermocellus (strain ATCC 27405 / DSM 1237 / JCM 9322 / NBRC 103400 / NCIMB 10682 / NRRL B-4536 / VPI 7372) (Clostridium thermocellum) protein is tRNA modification GTPase MnmE.